The sequence spans 386 residues: DNase toxin Tse7 (386 aa).

As to quaternary structure, interacts with Tsi7.

It carries out the reaction Endonucleolytic cleavage to 5'-phosphodinucleotide and 5'-phosphooligonucleotide end-products.. Functionally, type VI secretion exported toxin that via to its DNase activity induces growth arrest and ultimately DNA degradation within target cell. The activity is initially neutralized by a cognate immunity protein Tsi7. This chain is DNase toxin Tse7, found in Pseudomonas aeruginosa (strain ATCC 15692 / DSM 22644 / CIP 104116 / JCM 14847 / LMG 12228 / 1C / PRS 101 / PAO1).